We begin with the raw amino-acid sequence, 549 residues long: Cation/acetate symporter ActP (549 aa).

The next 13 membrane-spanning stretches (helical) occupy residues 32 to 54 (IQAI…WASK), 75 to 97 (GMAI…LVYT), 102 to 124 (GLIY…AERL), 145 to 167 (IRIL…QMVG), 182 to 204 (VAVV…LATT), 211 to 233 (AILL…NFNF), 263 to 285 (ALSL…MRFF), 298 to 320 (FYAT…GAIL), 361 to 383 (AVAF…SAVS), 404 to 423 (VSKI…GILF), 428 to 450 (IAFM…ILLS), 462 to 484 (LVGG…TIWV), and 494 to 516 (YPYE…LFSI).

It belongs to the sodium:solute symporter (SSF) (TC 2.A.21) family.

It localises to the cell inner membrane. Transports acetate. This Photorhabdus laumondii subsp. laumondii (strain DSM 15139 / CIP 105565 / TT01) (Photorhabdus luminescens subsp. laumondii) protein is Cation/acetate symporter ActP.